The following is a 238-amino-acid chain: Sugar fermentation stimulation protein homolog (238 aa).

The protein belongs to the SfsA family.

The chain is Sugar fermentation stimulation protein homolog from Alteromonas mediterranea (strain DSM 17117 / CIP 110805 / LMG 28347 / Deep ecotype).